A 500-amino-acid polypeptide reads, in one-letter code: Probable cytosol aminopeptidase 1 (500 aa).

Mn(2+)-binding residues include K263 and D268. Residue K275 is part of the active site. Positions 287, 346, and 348 each coordinate Mn(2+). R350 is a catalytic residue.

Belongs to the peptidase M17 family. The cofactor is Mn(2+).

The protein resides in the cytoplasm. It catalyses the reaction Release of an N-terminal amino acid, Xaa-|-Yaa-, in which Xaa is preferably Leu, but may be other amino acids including Pro although not Arg or Lys, and Yaa may be Pro. Amino acid amides and methyl esters are also readily hydrolyzed, but rates on arylamides are exceedingly low.. The enzyme catalyses Release of an N-terminal amino acid, preferentially leucine, but not glutamic or aspartic acids.. In terms of biological role, presumably involved in the processing and regular turnover of intracellular proteins. Catalyzes the removal of unsubstituted N-terminal amino acids from various peptides. The sequence is that of Probable cytosol aminopeptidase 1 (pepA1) from Shewanella oneidensis (strain ATCC 700550 / JCM 31522 / CIP 106686 / LMG 19005 / NCIMB 14063 / MR-1).